We begin with the raw amino-acid sequence, 572 residues long: SHUGOSHIN 1 (572 aa).

A coiled-coil region spans residues 59–110; the sequence is KHQQQAILISSKENAENLQKENTKLMKVVMERDGIKSDLKKLRIEFQKVQEQ. Disordered stretches follow at residues 185–221, 244–285, 333–352, and 484–572; these read DADH…PANS, KLVS…QTET, ARLK…SIET, and SRRQ…RGGF. The segment covering 192–201 has biased composition (polar residues); it reads SGSSNANSLQ. 4 stretches are compositionally biased toward basic and acidic residues: residues 244-257, 336-352, 523-542, and 552-572; these read KLVS…ENHI, KSQE…SIET, ELKR…EMRK, and AAEK…RGGF.

It belongs to the shugoshin family.

Functionally, protects sister chromatid centromere cohesion in meiosis I but not through the protection of the cohesin SYN1. Required with SGO2 for full protection of centromeric cohesion during anaphase I. Required to prevent precocious release of pericentromeric cohesins during meiosis. Not necessary for the maintenance of the synaptonemal complex (SC). Not required for monopolar spindle orientation in meiosis I. This chain is SHUGOSHIN 1, found in Arabidopsis thaliana (Mouse-ear cress).